The primary structure comprises 1032 residues: Protein transport protein Sec24D (1032 aa).

The segment at 1–260 (MSQQGYVATP…GPPQPQKKLD (260 aa)) is disordered. Polar residues predominate over residues 102 to 133 (PSAQSSYPGPISTSSVTQLGSQLSAMQINSYG). Residues 198 to 212 (GPPPPNAQYQPPPLP) show a composition bias toward pro residues. Residue Ser266 is modified to Phosphoserine. Positions 363, 366, 385, and 388 each coordinate Zn(2+). Residues 363-388 (CNRCKAYMCPFMQFIEGGRRYQCGFC) are zinc finger-like. Residues 901–974 (MLPAAVRCSE…PYSQQLRMIM (74 aa)) form a Gelsolin-like repeat.

This sequence belongs to the SEC23/SEC24 family. SEC24 subfamily. COPII is composed of at least five proteins: the Sec23/24 complex, the Sec13/31 complex and Sar1. Interacts with TMED2 and TMED10. Interacts with CNIH4. Interacts with GOSR2 (via IxM motif) and STX5 (via IxM motif); recruits GOSR2 and STX5 into COPII-coated vesicles. Interacts with KCNA3; this interaction is reduced in the presence of KCNE4. Ubiquitously expressed, with higher amounts in placenta, pancreas, heart and liver.

Its subcellular location is the cytoplasmic vesicle. The protein localises to the COPII-coated vesicle membrane. It localises to the endoplasmic reticulum membrane. It is found in the cytoplasm. The protein resides in the cytosol. In terms of biological role, component of the coat protein complex II (COPII) which promotes the formation of transport vesicles from the endoplasmic reticulum (ER). The coat has two main functions, the physical deformation of the endoplasmic reticulum membrane into vesicles and the selection of cargo molecules for their transport to the Golgi complex. Plays a central role in cargo selection within the COPII complex and together with SEC24C may have a different specificity compared to SEC24A and SEC24B. May more specifically package GPI-anchored proteins through the cargo receptor TMED10. May also be specific for IxM motif-containing cargos like the SNAREs GOSR2 and STX5. The polypeptide is Protein transport protein Sec24D (Homo sapiens (Human)).